The sequence spans 303 residues: Aspartate carbamoyltransferase catalytic subunit (303 aa).

Residues Arg-51 and Thr-52 each coordinate carbamoyl phosphate. L-aspartate is bound at residue Lys-80. Arg-101, His-129, and Gln-132 together coordinate carbamoyl phosphate. 2 residues coordinate L-aspartate: Arg-162 and Arg-221. Carbamoyl phosphate contacts are provided by Leu-260 and Pro-261.

This sequence belongs to the aspartate/ornithine carbamoyltransferase superfamily. ATCase family. Heterooligomer of catalytic and regulatory chains.

It carries out the reaction carbamoyl phosphate + L-aspartate = N-carbamoyl-L-aspartate + phosphate + H(+). Its pathway is pyrimidine metabolism; UMP biosynthesis via de novo pathway; (S)-dihydroorotate from bicarbonate: step 2/3. In terms of biological role, catalyzes the condensation of carbamoyl phosphate and aspartate to form carbamoyl aspartate and inorganic phosphate, the committed step in the de novo pyrimidine nucleotide biosynthesis pathway. In Saccharolobus islandicus (strain M.14.25 / Kamchatka #1) (Sulfolobus islandicus), this protein is Aspartate carbamoyltransferase catalytic subunit.